Here is a 606-residue protein sequence, read N- to C-terminus: Transmembrane 9 superfamily member 1 (606 aa).

Residues 1–27 (MTVVGNPRSWSCRWLPILILLLGTGHG) form the signal peptide. Residue Asn178 is glycosylated (N-linked (GlcNAc...) asparagine). Transmembrane regions (helical) follow at residues 237–257 (LSII…AVIL), 310–330 (VLGV…MALL), 339–359 (GAIN…SGYV), and 373–393 (VWNI…TWSV). N-linked (GlcNAc...) asparagine glycosylation is present at Asn401. A run of 4 helical transmembrane segments spans residues 412-432 (ILLL…IGGI), 469-489 (VGGF…FATV), 499-519 (GILF…SIAL), and 535-555 (SVLS…FYYA). N-linked (GlcNAc...) asparagine glycosylation is present at Asn559. A helical membrane pass occupies residues 570 to 590 (FGYSLLTGYVFFLMLGTISFF).

It belongs to the nonaspanin (TM9SF) (TC 9.A.2) family.

The protein resides in the lysosome membrane. It is found in the cytoplasmic vesicle. The protein localises to the autophagosome membrane. Its function is as follows. Plays an essential role in autophagy. This chain is Transmembrane 9 superfamily member 1 (TM9SF1), found in Pongo abelii (Sumatran orangutan).